Consider the following 60-residue polypeptide: Venom protein 4.1 (60 aa).

A signal peptide spans 1–26 (MKALCAILLVLFACSVMFEHFSISTA).

Belongs to the non-disulfide-bridged peptide (NDBP) superfamily. In terms of tissue distribution, expressed by the venom gland.

The protein resides in the secreted. The protein is Venom protein 4.1 of Lychas mucronatus (Chinese swimming scorpion).